The following is a 258-amino-acid chain: Acidic leucine-rich nuclear phosphoprotein 32 family member E (258 aa).

Position 1 is an N-acetylmethionine (M1). 4 LRR repeats span residues 18 to 38 (EVTELVLDNCLCVNGEIEGLN), 43 to 64 (ELEFLSMANVELSSLARLPSLN), 65 to 87 (KLRKLELSDNIISGGLEVLAEKC), and 89 to 110 (NLTYLNLSGNKIKDLSTVEALQ). A Glycyl lysine isopeptide (Lys-Gly) (interchain with G-Cter in SUMO2) cross-link involves residue K68. The region spanning 123 to 161 (CEITNLEDYRESIFELLQQITYLDGFDQEDNEAPDSEEE) is the LRRCT domain. Acidic residues-rich tracts occupy residues 149–206 (DQED…EEEV) and 216–238 (IQDEEDDDDYVDEGEEEEEEEEE). The segment at 149–258 (DQEDNEAPDS…AEDDGEEDDD (110 aa)) is disordered. Residues 205–258 (EVGLSYLMKEEIQDEEDDDDYVDEGEEEEEEEEEGPRGEKRKRDAEDDGEEDDD) form a ZID domain region. The span at 239-249 (GPRGEKRKRDA) shows a compositional bias: basic and acidic residues.

The protein belongs to the ANP32 family. In terms of assembly, component of a SWR1-like complex, composed of EP400, KAT5/TIP60, TRRAP, BRD8, RUVBL1, RUVBL2, ING3 and ANP32E; the complex does not contain SRCAP. Interacts with H2A.Z/H2AZ1. Interacts with the importin alpha KPNA1 and KPNA2. In terms of processing, phosphorylated. The phosphorylation is nuclear localization signal (NLS)-dependent.

It localises to the cytoplasm. It is found in the nucleus. In terms of biological role, histone chaperone that specifically mediates the genome-wide removal of histone H2A.Z/H2AZ1 from the nucleosome: removes H2A.Z/H2AZ1 from its normal sites of deposition, especially from enhancer and insulator regions. Not involved in deposition of H2A.Z/H2AZ1 in the nucleosome. May stabilize the evicted H2A.Z/H2AZ1-H2B dimer, thus shifting the equilibrium towards dissociation and the off-chromatin state. Inhibits activity of protein phosphatase 2A (PP2A). Does not inhibit protein phosphatase 1. May play a role in cerebellar development and synaptogenesis. This Rattus norvegicus (Rat) protein is Acidic leucine-rich nuclear phosphoprotein 32 family member E (Anp32e).